The sequence spans 265 residues: Diphthine synthase (265 aa).

S-adenosyl-L-methionine is bound by residues Leu9, Asp85, Ile88, 113 to 114, Leu168, Ala211, and His236; that span reads TA.

It belongs to the diphthine synthase family. As to quaternary structure, homodimer.

It carries out the reaction 2-[(3S)-amino-3-carboxypropyl]-L-histidyl-[translation elongation factor 2] + 3 S-adenosyl-L-methionine = diphthine-[translation elongation factor 2] + 3 S-adenosyl-L-homocysteine + 3 H(+). It functions in the pathway protein modification; peptidyl-diphthamide biosynthesis. In terms of biological role, S-adenosyl-L-methionine-dependent methyltransferase that catalyzes the trimethylation of the amino group of the modified target histidine residue in translation elongation factor 2 (EF-2), to form an intermediate called diphthine. The three successive methylation reactions represent the second step of diphthamide biosynthesis. The polypeptide is Diphthine synthase (Halorubrum lacusprofundi (strain ATCC 49239 / DSM 5036 / JCM 8891 / ACAM 34)).